The chain runs to 215 residues: Large ribosomal subunit protein uL3 (215 aa).

Gln-156 is subject to N5-methylglutamine.

Belongs to the universal ribosomal protein uL3 family. In terms of assembly, part of the 50S ribosomal subunit. Forms a cluster with proteins L14 and L19. Methylated by PrmB.

In terms of biological role, one of the primary rRNA binding proteins, it binds directly near the 3'-end of the 23S rRNA, where it nucleates assembly of the 50S subunit. The sequence is that of Large ribosomal subunit protein uL3 from Xylella fastidiosa (strain M23).